A 47-amino-acid chain; its full sequence is uncharacterized protein (47 aa).

The chain crosses the membrane as a helical span at residues 28–45; sequence VMIWGCLPYFLYVLIRMF.

The protein resides in the cell membrane. This is an uncharacterized protein from Bacillus subtilis (strain 168).